Here is a 510-residue protein sequence, read N- to C-terminus: Cytochrome P450 705A20 (510 aa).

The helical transmembrane segment at 7 to 27 threads the bilayer; the sequence is QHCFSFILLCFFSLLCYSLLF.

Belongs to the cytochrome P450 family. The cofactor is heme.

The protein localises to the membrane. The sequence is that of Cytochrome P450 705A20 (CYP705A20) from Arabidopsis thaliana (Mouse-ear cress).